A 933-amino-acid chain; its full sequence is Dual 3',5'-cyclic-AMP and -GMP phosphodiesterase 11A (933 aa).

The disordered stretch occupies residues 42–121; the sequence is HTSGQGASSL…LQRRASQKEL (80 aa). Phosphoserine is present on residues Ser-162, Ser-163, and Ser-239. 2 GAF domains span residues 217 to 370 and 402 to 558; these read DLTS…GIAI and DLEK…GLGI. Residue Ser-424 coordinates 3',5'-cyclic GMP. Positions 588 to 912 constitute a PDEase domain; the sequence is SKAEVDKFKA…RKWEELHQKR (325 aa). The active-site Proton donor is His-664. Residues His-668, His-704, Asp-705, and Asp-816 each contribute to the a divalent metal cation site. Positions 913–933 are disordered; sequence LQVSAASPDPASPMVAGEDRL.

Belongs to the cyclic nucleotide phosphodiesterase family. Requires a divalent metal cation as cofactor. As to expression, expressed in testis and developing spermatoza.

It localises to the cytoplasm. Its subcellular location is the cytosol. The catalysed reaction is 3',5'-cyclic GMP + H2O = GMP + H(+). The enzyme catalyses 3',5'-cyclic AMP + H2O = AMP + H(+). Inhibited by 3-isobutyl-1-methylxanthine (IBMX), zaprinast and dipyridamole. cGMP acts as an allosteric activator. In terms of biological role, plays a role in signal transduction by regulating the intracellular concentration of cyclic nucleotides cAMP and cGMP. Catalyzes the hydrolysis of both cAMP and cGMP to 5'-AMP and 5'-GMP, respectively. This chain is Dual 3',5'-cyclic-AMP and -GMP phosphodiesterase 11A (Pde11a), found in Mus musculus (Mouse).